The chain runs to 86 residues: Large ribosomal subunit protein bL31B (86 aa).

Belongs to the bacterial ribosomal protein bL31 family. Type B subfamily. In terms of assembly, part of the 50S ribosomal subunit.

The chain is Large ribosomal subunit protein bL31B from Streptococcus agalactiae serotype Ia (strain ATCC 27591 / A909 / CDC SS700).